A 208-amino-acid polypeptide reads, in one-letter code: Ribosomal RNA small subunit methyltransferase G (208 aa).

Residues G76, L81, 127-128, and R142 each bind S-adenosyl-L-methionine; that span reads VE.

Belongs to the methyltransferase superfamily. RNA methyltransferase RsmG family.

Its subcellular location is the cytoplasm. It carries out the reaction guanosine(527) in 16S rRNA + S-adenosyl-L-methionine = N(7)-methylguanosine(527) in 16S rRNA + S-adenosyl-L-homocysteine. Functionally, specifically methylates the N7 position of guanine in position 527 of 16S rRNA. The polypeptide is Ribosomal RNA small subunit methyltransferase G (Legionella pneumophila (strain Lens)).